Reading from the N-terminus, the 248-residue chain is Polyhedrin (248 aa).

Positions 1–27 are cleaved as a signal peptide; the sequence is MADVAGTSNRDFRGREQRLFNSEQYNY. 4 N-linked (GlcNAc...) asparagine; by host glycosylation sites follow: N28, N77, N86, and N237.

The protein localises to the host cytoplasm. Functionally, major component of the virus occlusion bodies, which are large proteinaceous structures (polyhedra), that protect the virus from the outside environment for extended periods until they are ingested by insect larvae. This chain is Polyhedrin, found in Bombyx mori cytoplasmic polyhedrosis virus (BmCPV).